The following is a 329-amino-acid chain: DNA-directed RNA polymerase subunit alpha (329 aa).

The tract at residues 1-234 (MQGSVTEFLK…EQLDAFVELR (234 aa)) is alpha N-terminal domain (alpha-NTD). The tract at residues 248–329 (FDPILLRPVD…WPPASLVDDL (82 aa)) is alpha C-terminal domain (alpha-CTD).

This sequence belongs to the RNA polymerase alpha chain family. Homodimer. The RNAP catalytic core consists of 2 alpha, 1 beta, 1 beta' and 1 omega subunit. When a sigma factor is associated with the core the holoenzyme is formed, which can initiate transcription.

The catalysed reaction is RNA(n) + a ribonucleoside 5'-triphosphate = RNA(n+1) + diphosphate. Functionally, DNA-dependent RNA polymerase catalyzes the transcription of DNA into RNA using the four ribonucleoside triphosphates as substrates. The polypeptide is DNA-directed RNA polymerase subunit alpha (Shewanella denitrificans (strain OS217 / ATCC BAA-1090 / DSM 15013)).